We begin with the raw amino-acid sequence, 470 residues long: MNRHISEILEKYLGRIPSLTEYHTLKSQYKNIHRVNIFNKDIFISLIKKNKKKFFSDIDTSVSEIKKLVFDYFTKQEQTYSIGKLYTIIELQTILVTTYTDILGVLTTKGPDIFSSNVQYNTSSMQKIASDALNSMNIATISDKVMGRHNVSSLVCNVNSLMEEYLRRHNKSCICYGSYSLHLLNPEIKYGDIDILQTNSRTFLIDLAFLIKFITGYNVILLKVPYLKNYMVLKDQNDSHIIDSFNIRQETMQHIPKVLIDNIYIVDPTIQLLSMLKMLSQIDRLEDLAKNPDKLTIRFATLLEYVRNKYGIILNGNSNNMPMPATIDIKKRIITVDTKYYNFAYDKCYVYLDENSLSSDILSLNADDAVDFENVSNSAFLVNDKTLYTYFSNTVLLSGNDKIHEISSRGISAHILIYQALMKHDISIPLTDIVNSLIGRNKQPIYEIIPRDKKTGKHGIIDIEKDIITH.

Active-site residues include aspartate 192 and aspartate 194.

The protein belongs to the poxviridae poly(A) polymerase catalytic subunit family. Heterodimer of a large (catalytic) subunit and a small (regulatory) subunit.

It catalyses the reaction RNA(n) + ATP = RNA(n)-3'-adenine ribonucleotide + diphosphate. Functionally, polymerase that creates the 3'-poly(A) tail of mRNA's. This is Poly(A) polymerase catalytic subunit (PAPL) from Odocoileus hemionus (Mule deer).